A 550-amino-acid polypeptide reads, in one-letter code: Transcription factor 7-like 1-C (550 aa).

The segment covering 1-11 (MPQLNSGGGDE) has biased composition (gly residues). The interval 1-60 (MPQLNSGGGDELGANDELIRFKDEGEQEEKSPGEGSAEDLADVKSSLVNESENHSSDSDS) is interaction with CTNNB1-A. Disordered regions lie at residues 1–76 (MPQL…EKPR), 182–206 (GTPP…HPSE), and 390–473 (WSAR…SLTT). 2 stretches are compositionally biased toward basic and acidic residues: residues 17-32 (ELIR…EKSP) and 51-76 (SENH…EKPR). Positions 108 to 311 (LGGITCPMVP…SPNLSRKSNV (204 aa)) are interaction with AES and TLE4-A. Residues 323–391 (IKKPLNAFML…LHSQLYPSWS (69 aa)) constitute a DNA-binding region (HMG box). Residues 406-415 (KQSPEMENYT) are compositionally biased toward basic and acidic residues. An interaction with CTBP-B region spans residues 407–550 (QSPEMENYTK…PLSLVTRSSD (144 aa)). Low complexity predominate over residues 444-463 (SPATPSAALASPAAPAATHS). Residues 464 to 473 (EQAQPLSLTT) are compositionally biased toward polar residues.

This sequence belongs to the TCF/LEF family. As to quaternary structure, interacts with csnk1e, ctnnb1-A, ctbp-B, dact1-A and gsk3b. May interact with ase and tle4-A. Phosphorylated. Phosphorylation by csnk1e promotes binding to ctnnb1-A while phosphorylation by gsk3b may reverse this effect.

It is found in the nucleus. In terms of biological role, participates in the Wnt signaling pathway. Binds to DNA and acts as a repressor in the absence of ctnnb1-A and possibly ctnnb1-B, and as an activator in the presence of these proteins. Required early in development for the establishment of the dorsal body axis in response to maternal Wnt signaling. In Xenopus laevis (African clawed frog), this protein is Transcription factor 7-like 1-C (tcf7l1-c).